The following is a 269-amino-acid chain: UPF0162 protein YchA (269 aa).

The protein belongs to the UPF0162 family.

In Escherichia coli O157:H7, this protein is UPF0162 protein YchA (ychA).